Here is a 1100-residue protein sequence, read N- to C-terminus: Formin-like protein 1 (1100 aa).

The segment covering 1–13 has biased composition (low complexity); it reads MGNAAGSAEQPAG. Disordered regions lie at residues 1-31, 167-200, 446-474, and 510-635; these read MGNA…PMPA, STDN…PKSR, RFSE…TRPS, and TPSG…AKKP. Gly-2 is lipidated: N-myristoyl glycine. A Phosphoserine modification is found at Ser-7. Residues 14-28 are compositionally biased toward pro residues; sequence PAAPPPKQPAPPKQP. A GBD/FH3 domain is found at 27–468; the sequence is QPMPAAGELE…PPEPEKAPPA (442 aa). Ser-184 is subject to Phosphoserine. Residues 517–538 are compositionally biased toward low complexity; it reads PTPGVPTGSPSPDLAPAAEPAP. A compositionally biased stretch (pro residues) spans 539 to 615; it reads GAAPPPPPPL…PPPPPPPGGP (77 aa). Phosphoserine is present on residues Ser-624 and Ser-693. Positions 632-1023 constitute an FH2 domain; the sequence is AKKPIQTKFR…QEAGADTPGK (392 aa). Residues 1008–1037 are disordered; sequence KKEAAAQEAGADTPGKGEPPAPKSPPKARR. The segment covering 1013 to 1023 has biased composition (low complexity); that stretch reads AQEAGADTPGK. Residue Ser-1031 is modified to Phosphoserine. Residues 1059–1090 enclose the DAD domain; the sequence is SDRDGAIEDIITVIKTVPFTARTGKRTSRLLC.

The protein belongs to the formin homology family. In terms of assembly, interacts with RAC1, PFN1 and PFN2. Interacts (activated by RAC1) with SRGAP2 (via SH3 domain); regulates the actin filament severing activity of FMNL1. In terms of processing, myristoylation mediates membrane localization and blebbing. Expressed in heart, brain, placenta, lung, liver, skeletal muscle, kidney and pancreas.

Its subcellular location is the cytoplasm. It localises to the cell membrane. The protein localises to the cytoplasmic vesicle. It is found in the phagosome. The protein resides in the cell cortex. Its subcellular location is the cell projection. It localises to the bleb. In terms of biological role, may play a role in the control of cell motility and survival of macrophages. Plays a role in the regulation of cell morphology and cytoskeletal organization. Required in the cortical actin filament dynamics and cell shape. This chain is Formin-like protein 1 (FMNL1), found in Homo sapiens (Human).